A 208-amino-acid polypeptide reads, in one-letter code: MSKYIGPDCRLCRREGMKLFLKGDRCYTEKCAFARRPYPPGQHGQERKKLSEYGMQLREKQKVKRIYGVLETQFRRYFEMAEKMKGIAGENLLSLLERRLDNVVYRLGFASSRGEARLLVSHAHFKVNGRTVNIPSYLVKVGDVIEVDERSKSKTRFVEIKEKYAKKPSPKWLEKDAENLVGKVIALPTREDIDMPIREHLIVELYSK.

The region spanning 98–160 (RRLDNVVYRL…SKSKTRFVEI (63 aa)) is the S4 RNA-binding domain.

It belongs to the universal ribosomal protein uS4 family. Part of the 30S ribosomal subunit. Contacts protein S5. The interaction surface between S4 and S5 is involved in control of translational fidelity.

Its function is as follows. One of the primary rRNA binding proteins, it binds directly to 16S rRNA where it nucleates assembly of the body of the 30S subunit. In terms of biological role, with S5 and S12 plays an important role in translational accuracy. This Caldicellulosiruptor bescii (strain ATCC BAA-1888 / DSM 6725 / KCTC 15123 / Z-1320) (Anaerocellum thermophilum) protein is Small ribosomal subunit protein uS4.